Here is a 481-residue protein sequence, read N- to C-terminus: Thiol protease (481 aa).

The 313-residue stretch at 169–481 (DLREQALSST…ENFWYIAYMY (313 aa)) folds into the Calpain catalytic domain. Active-site residues include cysteine 229, histidine 406, and asparagine 426.

It belongs to the peptidase C2 family.

With respect to regulation, inactive below 20 degrees Celsius and pH 6.0. Inhibited by divalent cations. Its function is as follows. Thiol protease. Probably an important virulence factor. The polypeptide is Thiol protease (tpr) (Porphyromonas gingivalis (strain ATCC BAA-308 / W83)).